The following is a 187-amino-acid chain: dCTP deaminase, dUMP-forming (187 aa).

DCTP-binding positions include 101 to 106 (KSSLGR), D119, 127 to 129 (TLE), Q148, Y162, K170, and Q174. The active-site Proton donor/acceptor is E129.

Belongs to the dCTP deaminase family. Homotrimer.

It carries out the reaction dCTP + 2 H2O = dUMP + NH4(+) + diphosphate. It participates in pyrimidine metabolism; dUMP biosynthesis; dUMP from dCTP: step 1/1. In terms of biological role, bifunctional enzyme that catalyzes both the deamination of dCTP to dUTP and the hydrolysis of dUTP to dUMP without releasing the toxic dUTP intermediate. This is dCTP deaminase, dUMP-forming from Corynebacterium diphtheriae (strain ATCC 700971 / NCTC 13129 / Biotype gravis).